A 164-amino-acid chain; its full sequence is R-phycoerythrin alpha chain (164 aa).

Positions 82 and 139 each coordinate (2R,3E)-phycoerythrobilin.

It belongs to the phycobiliprotein family. In terms of assembly, heterodimer of an alpha and a beta chain. Post-translationally, contains two covalently linked bilin chromophores.

Its subcellular location is the plastid. The protein resides in the chloroplast thylakoid membrane. Functionally, light-harvesting photosynthetic bile pigment-protein from the phycobiliprotein complex. The protein is R-phycoerythrin alpha chain (cpeA) of Porphyra purpurea (Red seaweed).